We begin with the raw amino-acid sequence, 153 residues long: 6,7-dimethyl-8-ribityllumazine synthase (153 aa).

5-amino-6-(D-ribitylamino)uracil-binding positions include F22, 56-58 (AFE), and 80-82 (CVI). 85-86 (AT) serves as a coordination point for (2S)-2-hydroxy-3-oxobutyl phosphate. H88 functions as the Proton donor in the catalytic mechanism. Position 113 (F113) interacts with 5-amino-6-(D-ribitylamino)uracil. R127 lines the (2S)-2-hydroxy-3-oxobutyl phosphate pocket.

It belongs to the DMRL synthase family.

The enzyme catalyses (2S)-2-hydroxy-3-oxobutyl phosphate + 5-amino-6-(D-ribitylamino)uracil = 6,7-dimethyl-8-(1-D-ribityl)lumazine + phosphate + 2 H2O + H(+). It functions in the pathway cofactor biosynthesis; riboflavin biosynthesis; riboflavin from 2-hydroxy-3-oxobutyl phosphate and 5-amino-6-(D-ribitylamino)uracil: step 1/2. Catalyzes the formation of 6,7-dimethyl-8-ribityllumazine by condensation of 5-amino-6-(D-ribitylamino)uracil with 3,4-dihydroxy-2-butanone 4-phosphate. This is the penultimate step in the biosynthesis of riboflavin. The polypeptide is 6,7-dimethyl-8-ribityllumazine synthase (Endomicrobium trichonymphae).